A 209-amino-acid chain; its full sequence is Guanylate kinase (209 aa).

Positions glycine 16 to leucine 198 constitute a Guanylate kinase-like domain. Glycine 23–serine 30 serves as a coordination point for ATP.

Belongs to the guanylate kinase family.

The protein localises to the cytoplasm. The enzyme catalyses GMP + ATP = GDP + ADP. Its function is as follows. Essential for recycling GMP and indirectly, cGMP. This is Guanylate kinase from Rhodopirellula baltica (strain DSM 10527 / NCIMB 13988 / SH1).